The following is a 456-amino-acid chain: Ammonium transporter Amt2 (456 aa).

The next 11 membrane-spanning stretches (helical) occupy residues L18–L38, I61–T81, W109–G129, I141–L161, A170–I190, I211–G231, V255–F275, V281–A301, I304–F324, V339–V359, and V377–F397.

It belongs to the ammonia transporter channel (TC 1.A.11.2) family. As to quaternary structure, homotrimer. Interacts with both GlnK1 and GlnK2 after ammonium shock.

The protein localises to the cell membrane. Involved in the uptake of ammonium/ammonia (NH(4)(+)/NH(3)). Transport is electrogenic. This Haloferax mediterranei (strain ATCC 33500 / DSM 1411 / JCM 8866 / NBRC 14739 / NCIMB 2177 / R-4) (Halobacterium mediterranei) protein is Ammonium transporter Amt2.